The following is a 211-amino-acid chain: MAECVVHDWQGKEAGKASLELKVSKETTAVDLMHRAVLRQQAHSRQGTASTLTRAEVRGGGRKPYKQKGTGRARQGTIRTPLRPGGGIIFGPKPRTYNLAMNRKERRLALRTALMARIEDVIVVKDFGNSLKVPKTREISDALIRLGLAADAKVLIILSTPSEIIRRSVRNLEKVKLIAADQLNVFDLLHANSLVLSEEALAKIQEVYGDD.

Positions 41–53 (QAHSRQGTASTLT) are enriched in polar residues. Residues 41–78 (QAHSRQGTASTLTRAEVRGGGRKPYKQKGTGRARQGTI) are disordered. Positions 60 to 71 (GGRKPYKQKGTG) are enriched in basic residues.

This sequence belongs to the universal ribosomal protein uL4 family. As to quaternary structure, part of the 50S ribosomal subunit.

One of the primary rRNA binding proteins, this protein initially binds near the 5'-end of the 23S rRNA. It is important during the early stages of 50S assembly. It makes multiple contacts with different domains of the 23S rRNA in the assembled 50S subunit and ribosome. Its function is as follows. Forms part of the polypeptide exit tunnel. In Prochlorococcus marinus (strain MIT 9313), this protein is Large ribosomal subunit protein uL4.